The chain runs to 291 residues: Serine hydrolase BPHL (291 aa).

An N-terminal signal peptide occupies residues 1 to 37 (MVAVLGGRGVLRLRLLLSALKPGIHVPRAGPAAAFGT). An AB hydrolase-1 domain is found at 62 to 181 (AVLLLPGMLG…DSMIYEGIRD (120 aa)). Lys86 and Lys119 each carry N6-acetyllysine. Lys126 carries the post-translational modification N6-acetyllysine; alternate. At Lys126 the chain carries N6-succinyllysine; alternate. Residue Ser139 is the Nucleophile of the active site. Lys184 bears the N6-succinyllysine mark. At Lys191 the chain carries N6-acetyllysine; alternate. At Lys191 the chain carries N6-succinyllysine; alternate. Position 217 is an N6-acetyllysine (Lys217). Asp221 lines the Mg(2+) pocket. An N6-acetyllysine modification is found at Lys243. Asp244 serves as the catalytic Charge relay system. N6-acetyllysine; alternate is present on residues Lys260 and Lys271. N6-succinyllysine; alternate occurs at positions 260 and 271. The active-site Charge relay system is His272.

The protein belongs to the AB hydrolase superfamily. Lipase family. In terms of assembly, monomer. May also form homodimers. Expressed at high levels in liver and kidney and lower levels in heart, intestine and skeletal muscle.

The protein resides in the mitochondrion. It catalyses the reaction L-homocysteine thiolactone + H2O = L-homocysteine + H(+). The catalysed reaction is valacyclovir + H2O = acyclovir + L-valine + H(+). Functionally, specific alpha-amino acid ester serine hydrolase that prefers small, hydrophobic, and aromatic side chains and does not have a stringent requirement for the leaving group other than preferring a primary alcohol. Has homocysteine-thiolactonase activity (in vitro) and may play a significant role in the detoxification of homocysteine thiolactone in vivo. Catalyzes the hydrolytic activation of amino acid ester prodrugs of nucleoside analogs such as valacyclovir and valganciclovir, converting them into their active forms (acyclovir and ganciclovir). This chain is Serine hydrolase BPHL (BPHL), found in Homo sapiens (Human).